A 170-amino-acid polypeptide reads, in one-letter code: MANKLFLVCATFALCFLLTNASIYRTVVEFDEDDASNPMGPRQKCQKEFQQSQHLRACQKLMRMQMRQGRGGGPSLDDEFDLEDDIENPQGPQQGHQILQQCCSELRQEEPVCVCPTLRQAARAVSLQGQHGPFQSRKIYKTAKYLPNICKIQQVGECPFQTTIPFFPPY.

Positions 1-21 (MANKLFLVCATFALCFLLTNA) are cleaved as a signal peptide. Propeptides lie at residues 22–37 (SIYR…DASN) and 73–88 (GPSL…DIEN).

It belongs to the 2S seed storage albumins family. In terms of assembly, the mature protein consists of a small and a large chain linked by disulfide bonds.

In terms of biological role, this is a 2S seed storage protein. The chain is 2S seed storage protein 2 (AT2S2) from Arabidopsis thaliana (Mouse-ear cress).